The following is a 421-amino-acid chain: Protein FAM110C (421 aa).

3 disordered regions span residues 1 to 36 (MRAL…NKSA), 51 to 80 (TLGS…PSAL), and 141 to 266 (TTRV…PASM). Basic and acidic residues-rich tracts occupy residues 143 to 155 (RVAD…KETE), 185 to 202 (PAEK…KETE), and 232 to 249 (PAEK…KETE). Position 350 is a phosphoserine (Ser350).

It belongs to the FAM110 family. Interacts with AKT1; the interaction is transient and follows AKT1 activation. Interacts with PPP2CA and alpha-tubulin.

It localises to the cytoplasm. The protein resides in the cytoskeleton. The protein localises to the microtubule organizing center. It is found in the centrosome. Its subcellular location is the spindle pole. It localises to the nucleus. May play a role in microtubule organization. May play a role in cell spreading and cell migration of epithelial cells; the function may involve the AKT1 signaling pathway. The chain is Protein FAM110C (Fam110c) from Mus musculus (Mouse).